The primary structure comprises 238 residues: uncharacterized protein (238 aa).

Positions 1 to 64 (MRLDKYLSKS…KPKKNVYLML (64 aa)) constitute an S4 RNA-binding domain. Catalysis depends on aspartate 103, which acts as the Nucleophile.

The protein belongs to the pseudouridine synthase RsuA family.

The catalysed reaction is a uridine in RNA = a pseudouridine in RNA. This is an uncharacterized protein from Aquifex aeolicus (strain VF5).